A 334-amino-acid chain; its full sequence is L-lactate dehydrogenase B-B chain (334 aa).

NAD(+)-binding positions include 30 to 58 (GQVG…VEDK) and arginine 100. Residues arginine 107, asparagine 139, and arginine 170 each coordinate substrate. Asparagine 139 serves as a coordination point for NAD(+). Histidine 194 functions as the Proton acceptor in the catalytic mechanism. Residue threonine 249 coordinates substrate.

It belongs to the LDH/MDH superfamily. LDH family. In terms of assembly, homotetramer.

It is found in the cytoplasm. The enzyme catalyses (S)-lactate + NAD(+) = pyruvate + NADH + H(+). The protein operates within fermentation; pyruvate fermentation to lactate; (S)-lactate from pyruvate: step 1/1. The chain is L-lactate dehydrogenase B-B chain from Danio rerio (Zebrafish).